The following is a 488-amino-acid chain: GTPase Der (488 aa).

EngA-type G domains follow at residues P3–M166 and I199–T372. GTP is bound by residues G9 to S16, D56 to I60, N118 to D121, G205 to S212, D252 to V256, and N317 to D320. The KH-like domain maps to R373–D457. Residues F460–K488 are disordered. Over residues R473–K488 the composition is skewed to basic residues.

This sequence belongs to the TRAFAC class TrmE-Era-EngA-EngB-Septin-like GTPase superfamily. EngA (Der) GTPase family. In terms of assembly, associates with the 50S ribosomal subunit.

Its function is as follows. GTPase that plays an essential role in the late steps of ribosome biogenesis. The polypeptide is GTPase Der (Shewanella baltica (strain OS155 / ATCC BAA-1091)).